Reading from the N-terminus, the 638-residue chain is 3D-(3,5/4)-trihydroxycyclohexane-1,2-dione hydrolase (638 aa).

A thiamine diphosphate-binding site is contributed by Glu67. A thiamine pyrophosphate binding region spans residues 442 to 523; it reads SLPGDLQRLW…INIMLFDNSG (82 aa). Mg(2+) is bound by residues Asp494 and Asn521.

The protein belongs to the TPP enzyme family. Mg(2+) is required as a cofactor. The cofactor is thiamine diphosphate.

It carries out the reaction 3D-3,5/4-trihydroxycyclohexane-1,2-dione + H2O = 5-deoxy-D-glucuronate + H(+). It functions in the pathway polyol metabolism; myo-inositol degradation into acetyl-CoA; acetyl-CoA from myo-inositol: step 3/7. Involved in the cleavage of the C1-C2 bond of 3D-(3,5/4)-trihydroxycyclohexane-1,2-dione (THcHDO) to yield 5-deoxy-glucuronate (5DG). The chain is 3D-(3,5/4)-trihydroxycyclohexane-1,2-dione hydrolase from Listeria monocytogenes serovar 1/2a (strain ATCC BAA-679 / EGD-e).